A 362-amino-acid polypeptide reads, in one-letter code: Ferredoxin--NADP reductase, leaf isozyme 1, chloroplastic (362 aa).

The N-terminal 36 residues, Met1–Arg36, are a transit peptide targeting the chloroplast. In terms of domain architecture, FAD-binding FR-type spans Lys83–Met205. Residues Arg141–Ser144, Cys162–Lys164, Tyr168, Val179–Ser181, and Thr220 contribute to the FAD site. NADP(+) is bound by residues Ser144 and Lys164. A disulfide bond links Cys180 and Cys185. Residue Ser181 is modified to Phosphoserine. Residues Thr220, Val252–Pro253, Ser282–Arg283, Lys292, Gly321–Leu322, and Glu360 each bind NADP(+).

It belongs to the ferredoxin--NADP reductase type 1 family. As to quaternary structure, heterodimer with LFNR2. Component of high molecular weight thylakoid LFNRs-containing protein complexes containing LIR1, LFNR1, LFNR2, TIC62 and TROL proteins. Interacts directly with LFNR1 and LFNR2; LIR1 increases the affinity of LFNR1 and LFNR2 for TIC62 and subsequent thylakoid relocalization. The cofactor is FAD. May form interchain disulfide bonds with LIR1.

Its subcellular location is the plastid. It localises to the chloroplast stroma. It is found in the chloroplast thylakoid membrane. The enzyme catalyses 2 reduced [2Fe-2S]-[ferredoxin] + NADP(+) + H(+) = 2 oxidized [2Fe-2S]-[ferredoxin] + NADPH. It participates in energy metabolism; photosynthesis. Plays a key role in regulating the relative amounts of cyclic and non-cyclic electron flow to meet the demands of the plant for ATP and reducing power. This Oryza sativa subsp. indica (Rice) protein is Ferredoxin--NADP reductase, leaf isozyme 1, chloroplastic.